The following is a 152-amino-acid chain: SsrA-binding protein (152 aa).

The protein belongs to the SmpB family.

The protein localises to the cytoplasm. Functionally, required for rescue of stalled ribosomes mediated by trans-translation. Binds to transfer-messenger RNA (tmRNA), required for stable association of tmRNA with ribosomes. tmRNA and SmpB together mimic tRNA shape, replacing the anticodon stem-loop with SmpB. tmRNA is encoded by the ssrA gene; the 2 termini fold to resemble tRNA(Ala) and it encodes a 'tag peptide', a short internal open reading frame. During trans-translation Ala-aminoacylated tmRNA acts like a tRNA, entering the A-site of stalled ribosomes, displacing the stalled mRNA. The ribosome then switches to translate the ORF on the tmRNA; the nascent peptide is terminated with the 'tag peptide' encoded by the tmRNA and targeted for degradation. The ribosome is freed to recommence translation, which seems to be the essential function of trans-translation. The protein is SsrA-binding protein of Rickettsia africae (strain ESF-5).